The following is a 141-amino-acid chain: Nucleoside diphosphate kinase (141 aa).

Residues Lys-11, Phe-59, Arg-87, Thr-93, Arg-104, and Asn-114 each contribute to the ATP site. The active-site Pros-phosphohistidine intermediate is the His-117.

The protein belongs to the NDK family. In terms of assembly, homotetramer. Mg(2+) serves as cofactor.

Its subcellular location is the cytoplasm. The enzyme catalyses a 2'-deoxyribonucleoside 5'-diphosphate + ATP = a 2'-deoxyribonucleoside 5'-triphosphate + ADP. It carries out the reaction a ribonucleoside 5'-diphosphate + ATP = a ribonucleoside 5'-triphosphate + ADP. Functionally, major role in the synthesis of nucleoside triphosphates other than ATP. The ATP gamma phosphate is transferred to the NDP beta phosphate via a ping-pong mechanism, using a phosphorylated active-site intermediate. This is Nucleoside diphosphate kinase from Albidiferax ferrireducens (strain ATCC BAA-621 / DSM 15236 / T118) (Rhodoferax ferrireducens).